Consider the following 739-residue polypeptide: Oxysterol-binding protein-related protein 9 (739 aa).

A PH domain is found at 2-99 (ASIMEGPLSK…WIHALEETIL (98 aa)). Disordered regions lie at residues 220-292 (TQAS…SYSS) and 306-371 (SSTS…ESVE). The segment covering 249–259 (NLGSRQSPTPI) has biased composition (polar residues). Positions 260–276 (STGSGQSAPSSSLTSPS) are enriched in low complexity. Polar residues-rich tracts occupy residues 277–292 (HVNLSPNTVPDFSYSS), 306–330 (SSTSPKRCMDSSESATALTHSSTGA), and 338–352 (TESLNSSMSNGTNEA).

This sequence belongs to the OSBP family.

It catalyses the reaction a 1,2-diacyl-sn-glycero-3-phospho-(1D-myo-inositol 4-phosphate)(out) + a 1,2-diacyl-sn-glycero-3-phospho-L-serine(in) = a 1,2-diacyl-sn-glycero-3-phospho-(1D-myo-inositol 4-phosphate)(in) + a 1,2-diacyl-sn-glycero-3-phospho-L-serine(out). Its function is as follows. Interacts with OSBPL11 to function as lipid transfer proteins. Together they form a heterodimer that localizes at the ER-trans-Golgi membrane contact sites, and exchanges phosphatidylserine (1,2-diacyl-sn-glycero-3-phospho-L-serine, PS) for phosphatidylinositol-4-phosphate (1,2-diacyl-sn-glycero-3-phospho-(1D-myo-inositol 4-phosphate), PI(4)P) between the two organelles, a step that is critical for sphingomyelin synthesis in the Golgi complex. The sequence is that of Oxysterol-binding protein-related protein 9 (osbpl9) from Xenopus tropicalis (Western clawed frog).